We begin with the raw amino-acid sequence, 382 residues long: Pentraxin-related protein PTX3 (382 aa).

An N-terminal signal peptide occupies residues 1-17 (MHISVILFCALWSAVSA). A coiled-coil region spans residues 79 to 137 (VMLRGELQKLQAELGRLEGSLQKLCGPEAPSETRLARALDDLLQASRDAGRRLARLEDA). 2 disulfides stabilise this stretch: C180–C358 and C211–C272. Residues 180–382 (CETAILFPMR…QPHGGAQYVY (203 aa)) enclose the Pentraxin (PTX) domain. N221 is a glycosylation site (N-linked (GlcNAc...) asparagine).

Homooctamer; disulfide-linked. Binds to C1q.

Its subcellular location is the secreted. Its function is as follows. Plays a role in the regulation of innate resistance to pathogens, inflammatory reactions, possibly clearance of self-components and female fertility. The polypeptide is Pentraxin-related protein PTX3 (PTX3) (Bos taurus (Bovine)).